The sequence spans 440 residues: Ribosomal protein uS12 methylthiotransferase RimO (440 aa).

The MTTase N-terminal domain occupies 6–116; that stretch reads PKVGFVSLGC…VVTAVHEVVP (111 aa). [4Fe-4S] cluster is bound by residues C15, C51, C80, C149, C153, and C156. The region spanning 135–373 is the Radical SAM core domain; sequence LTPRHYAYLK…MAHQQAISAA (239 aa). The TRAM domain occupies 376–440; it reads QLKVGKEIEV…DEYDLWAELV (65 aa).

Belongs to the methylthiotransferase family. RimO subfamily. It depends on [4Fe-4S] cluster as a cofactor.

It is found in the cytoplasm. It catalyses the reaction L-aspartate(89)-[ribosomal protein uS12]-hydrogen + (sulfur carrier)-SH + AH2 + 2 S-adenosyl-L-methionine = 3-methylsulfanyl-L-aspartate(89)-[ribosomal protein uS12]-hydrogen + (sulfur carrier)-H + 5'-deoxyadenosine + L-methionine + A + S-adenosyl-L-homocysteine + 2 H(+). Functionally, catalyzes the methylthiolation of an aspartic acid residue of ribosomal protein uS12. The polypeptide is Ribosomal protein uS12 methylthiotransferase RimO (Pseudomonas aeruginosa (strain UCBPP-PA14)).